The sequence spans 407 residues: Carbamoyl phosphate synthase small chain (407 aa).

The segment at 1–203 is CPSase; that stretch reads MSQNESGTIA…EPCGEYEGKE (203 aa). L-glutamine is bound by residues serine 61, glycine 255, and glycine 257. The 199-residue stretch at 207–405 folds into the Glutamine amidotransferase type-1 domain; the sequence is TVAAVDLGIK…CELMKNNSKE (199 aa). Cysteine 283 acts as the Nucleophile in catalysis. L-glutamine is bound by residues phenylalanine 284, glutamine 287, asparagine 325, glycine 327, and phenylalanine 328. Residues histidine 378 and glutamate 380 contribute to the active site.

It belongs to the CarA family. As to quaternary structure, composed of two chains; the small (or glutamine) chain promotes the hydrolysis of glutamine to ammonia, which is used by the large (or ammonia) chain to synthesize carbamoyl phosphate. Tetramer of heterodimers (alpha,beta)4.

It carries out the reaction hydrogencarbonate + L-glutamine + 2 ATP + H2O = carbamoyl phosphate + L-glutamate + 2 ADP + phosphate + 2 H(+). The enzyme catalyses L-glutamine + H2O = L-glutamate + NH4(+). It functions in the pathway amino-acid biosynthesis; L-arginine biosynthesis; carbamoyl phosphate from bicarbonate: step 1/1. Its pathway is pyrimidine metabolism; UMP biosynthesis via de novo pathway; (S)-dihydroorotate from bicarbonate: step 1/3. Its function is as follows. Small subunit of the glutamine-dependent carbamoyl phosphate synthetase (CPSase). CPSase catalyzes the formation of carbamoyl phosphate from the ammonia moiety of glutamine, carbonate, and phosphate donated by ATP, constituting the first step of 2 biosynthetic pathways, one leading to arginine and/or urea and the other to pyrimidine nucleotides. The small subunit (glutamine amidotransferase) binds and cleaves glutamine to supply the large subunit with the substrate ammonia. This is Carbamoyl phosphate synthase small chain from Bifidobacterium longum (strain DJO10A).